We begin with the raw amino-acid sequence, 254 residues long: Triosephosphate isomerase (254 aa).

9–11 (NWK) contacts substrate. Histidine 96 (electrophile) is an active-site residue. The active-site Proton acceptor is the glutamate 169. Residues glycine 175, serine 215, and 236 to 237 (GG) each bind substrate.

This sequence belongs to the triosephosphate isomerase family. In terms of assembly, homodimer.

It localises to the cytoplasm. It carries out the reaction D-glyceraldehyde 3-phosphate = dihydroxyacetone phosphate. The protein operates within carbohydrate biosynthesis; gluconeogenesis. It functions in the pathway carbohydrate degradation; glycolysis; D-glyceraldehyde 3-phosphate from glycerone phosphate: step 1/1. In terms of biological role, involved in the gluconeogenesis. Catalyzes stereospecifically the conversion of dihydroxyacetone phosphate (DHAP) to D-glyceraldehyde-3-phosphate (G3P). The sequence is that of Triosephosphate isomerase from Borrelia hermsii (strain HS1 / DAH).